A 148-amino-acid chain; its full sequence is Putative pre-16S rRNA nuclease (148 aa).

The protein belongs to the YqgF nuclease family.

It localises to the cytoplasm. In terms of biological role, could be a nuclease involved in processing of the 5'-end of pre-16S rRNA. In Chlamydia muridarum (strain MoPn / Nigg), this protein is Putative pre-16S rRNA nuclease.